Here is a 145-residue protein sequence, read N- to C-terminus: FAD synthase (145 aa).

ATP-binding positions include 9 to 10 (TF), 14 to 17 (HPGH), D94, and Y122.

Belongs to the archaeal FAD synthase family. As to quaternary structure, homodimer. A divalent metal cation is required as a cofactor.

The catalysed reaction is FMN + ATP + H(+) = FAD + diphosphate. It participates in cofactor biosynthesis; FAD biosynthesis; FAD from FMN: step 1/1. Functionally, catalyzes the transfer of the AMP portion of ATP to flavin mononucleotide (FMN) to produce flavin adenine dinucleotide (FAD) coenzyme. The protein is FAD synthase of Methanocaldococcus infernus (strain DSM 11812 / JCM 15783 / ME).